The following is a 342-amino-acid chain: Phenylalanine--tRNA ligase alpha subunit (342 aa).

E257 is a Mg(2+) binding site.

The protein belongs to the class-II aminoacyl-tRNA synthetase family. Phe-tRNA synthetase alpha subunit type 1 subfamily. In terms of assembly, tetramer of two alpha and two beta subunits. It depends on Mg(2+) as a cofactor.

Its subcellular location is the cytoplasm. It carries out the reaction tRNA(Phe) + L-phenylalanine + ATP = L-phenylalanyl-tRNA(Phe) + AMP + diphosphate + H(+). The protein is Phenylalanine--tRNA ligase alpha subunit (pheS) of Chlamydia trachomatis serovar D (strain ATCC VR-885 / DSM 19411 / UW-3/Cx).